The chain runs to 360 residues: Peptide chain release factor 1 (360 aa).

Q235 is modified (N5-methylglutamine). Residues 285–313 (KRQQAEASTRRNLLGSGDRSDRNRTYNFP) form a disordered region.

This sequence belongs to the prokaryotic/mitochondrial release factor family. In terms of processing, methylated by PrmC. Methylation increases the termination efficiency of RF1.

It is found in the cytoplasm. Its function is as follows. Peptide chain release factor 1 directs the termination of translation in response to the peptide chain termination codons UAG and UAA. This is Peptide chain release factor 1 from Salmonella paratyphi A (strain ATCC 9150 / SARB42).